The following is a 690-amino-acid chain: Beta-galactosidase (690 aa).

Residue Asn-173 coordinates substrate. Glu-174 serves as the catalytic Proton donor. Trp-345 serves as a coordination point for substrate.

It belongs to the glycosyl hydrolase 42 family.

The enzyme catalyses Hydrolysis of terminal non-reducing beta-D-galactose residues in beta-D-galactosides.. Its activity is regulated as follows. Activity stimulated by beta-mercaptoethanol. Functionally, highly specific towards beta-D-galactoside substrates. Hydrolyzes 5-bromo-4-chloro-3-indolyl-beta-D-galactopyranoside (X-Gal) and o-nitrophenyl-beta-D-galactopyranoside (ONPG). Has activity against p-nitrophenyl(pNP)-beta-D-galactoside, but not significantly at all towards pNP-alpha-D-galactoside, pNP-beta-D-glucoside, pNP-beta-D-mannoside, pNP-beta-L-fucoside, pNP-beta-D-xyloside, pNP-beta-L-arabinoside, pNP-beta-D-galuronide, pNP-beta-D-glucuronide, pNP-beta-D-lactoside or pNP-beta-D-cellobioside. This is Beta-galactosidase from Arthrobacter sp.